Here is a 180-residue protein sequence, read N- to C-terminus: Chromatin structure-remodeling complex protein RSC14 (180 aa).

In terms of assembly, interacts with STH1, RSC3 and ARP9. Component of the two forms of the RSC complex composed of at least either RSC1 or RSC2, and ARP7, ARP9, LDB7, NPL6, RSC3, RSC30, RSC4, RSC58, RSC6, RSC8, RSC9, SFH1, STH1, HTL1 and probably RTT102. The complexes interact with histone and histone variant components of centromeric chromatin. Component of a fungal-specific module (HTL1-LDB7-NPL6-RSC3-RSC30) within the RSC complex.

Its subcellular location is the nucleus. In terms of biological role, component of the chromatin structure-remodeling complex (RSC), which is involved in transcription regulation and nucleosome positioning. RSC is responsible for the transfer of a histone octamer from a nucleosome core particle to naked DNA. The reaction requires ATP and involves an activated RSC-nucleosome intermediate. Remodeling reaction also involves DNA translocation, DNA twist and conformational change. As a reconfigurer of centromeric and flanking nucleosomes, RSC complex is required both for proper kinetochore function in chromosome segregation and, via a PKC1-dependent signaling pathway, for organization of the cellular cytoskeleton. Together with HTL1, NPL6, RSC3, RSC30 components, defines a fungal-specific module within the RSC complex that plays a role in many cellular functions including the maintenance of cell wall integrity. May be involved in the transfer of mannosylphosphate (MP) groups into N-linked oligosaccharides. This Saccharomyces cerevisiae (strain ATCC 204508 / S288c) (Baker's yeast) protein is Chromatin structure-remodeling complex protein RSC14 (LDB7).